Consider the following 370-residue polypeptide: Cytoplasmic envelopment protein 2 (370 aa).

It belongs to the herpesviridae cytoplasmic envelopment protein 2 family. Interacts with cytoplasmic envelopment protein 3 and with the capsid.

The protein localises to the virion tegument. Its subcellular location is the host cytoplasm. It localises to the host nucleus. In terms of biological role, plays a critical role in cytoplasmic virus egress. Participates in the final step of tegumentation and envelope acquisition within the host cytoplasm by directly interacting with the capsid. Upon virion binding to target cell, a signaling cascade is triggered to disrupt the interaction with the capsid, thereby preparing capsid uncoating. This chain is Cytoplasmic envelopment protein 2, found in Equine herpesvirus 1 (strain V592) (EHV-1).